A 622-amino-acid polypeptide reads, in one-letter code: Chaperone protein HscA homolog (622 aa).

It belongs to the heat shock protein 70 family.

Its function is as follows. Chaperone involved in the maturation of iron-sulfur cluster-containing proteins. Has a low intrinsic ATPase activity which is markedly stimulated by HscB. This Burkholderia ambifaria (strain MC40-6) protein is Chaperone protein HscA homolog.